The sequence spans 114 residues: Cytochrome c2 (114 aa).

Glutamine 1 is modified (pyrrolidone carboxylic acid). Positions 13, 16, 17, and 93 each coordinate heme c.

It belongs to the cytochrome c family. In terms of processing, binds 1 heme c group covalently per subunit.

Cytochrome c2 is found mainly in purple, non-sulfur, photosynthetic bacteria where it functions as the electron donor to the oxidized bacteriochlorophyll in the photophosphorylation pathway. However, it may also have a role in the respiratory chain and is found in some non-photosynthetic bacteria. The chain is Cytochrome c2 (cycA) from Rhodopseudomonas palustris.